Consider the following 88-residue polypeptide: Small ribosomal subunit protein uS15c (88 aa).

The protein belongs to the universal ribosomal protein uS15 family. Part of the 30S ribosomal subunit.

It localises to the plastid. It is found in the chloroplast. The sequence is that of Small ribosomal subunit protein uS15c (rps15) from Crucihimalaya wallichii (Rock-cress).